Here is a 310-residue protein sequence, read N- to C-terminus: GMP synthase [glutamine-hydrolyzing] subunit B (310 aa).

Residues 1–187 (MSFSDYISRI…LGLPTDIQPF (187 aa)) form the GMPS ATP-PPase domain. 27–33 (SGGQDSS) lines the ATP pocket.

In terms of assembly, heterodimer composed of a glutamine amidotransferase subunit (A) and a GMP-binding subunit (B).

It catalyses the reaction XMP + L-glutamine + ATP + H2O = GMP + L-glutamate + AMP + diphosphate + 2 H(+). Its pathway is purine metabolism; GMP biosynthesis; GMP from XMP (L-Gln route): step 1/1. Catalyzes the synthesis of GMP from XMP. This Thermoplasma volcanium (strain ATCC 51530 / DSM 4299 / JCM 9571 / NBRC 15438 / GSS1) protein is GMP synthase [glutamine-hydrolyzing] subunit B (guaAB).